The sequence spans 86 residues: UPF0457 protein BCE33L2265 (86 aa).

It belongs to the UPF0457 family.

The chain is UPF0457 protein BCE33L2265 from Bacillus cereus (strain ZK / E33L).